The following is an 839-amino-acid chain: Katanin p80 WD40 repeat-containing subunit B1 homolog KTN80.3 (839 aa).

WD repeat units lie at residues 14-54 (AHSA…AILS), 57-96 (GHSS…VVRT), 99-138 (GHRS…CIHT), 141-182 (GHTR…HEFK), 184-222 (HEGK…LIGS), 225-265 (TETT…DGVD), and 267-304 (GWSN…TEPM). The DWD box motif lies at 115 to 131 (FFASGSLDTNLKIWDIR). Disordered stretches follow at residues 303–340 (PMSG…LGKL), 357–435 (GKLS…KSAS), 501–561 (LQSK…RTNK), and 575–648 (SLVR…PSNM). Polar residues-rich tracts occupy residues 307–334 (GATQ…NSSK), 375–385 (TGRSSVSQSSD), 411–435 (TLSS…KSAS), 501–533 (LQSK…QSQP), 589–602 (DLIS…SSPT), and 630–648 (VSSS…PSNM).

It belongs to the WD repeat KATNB1 family. In terms of assembly, component of KTN80-KTN1 complexes composed of a hexamer of KTN1-KTN80 heterodimers that sense microtubule (MT) geometry to confer precise MT severing. Interacts directly with AAA1/KTN1 and KTN80.1, and weakly with KTN80.4. As to expression, expressed in siliques, flowers, leaves, stems and roots.

The protein localises to the cytoplasm. The protein resides in the cytoskeleton. Functionally, may participate in a complex which severs microtubules in an ATP-dependent manner. Microtubule severing may promote rapid reorganization of cellular microtubule arrays. Confers precision to microtubule (MT) severing by specific targeting of KTN1 to MT cleavage sites such as crossover or branching nucleation sites. Together with other KTN80s, regulates cell elongation by modulating MT organization. The protein is Katanin p80 WD40 repeat-containing subunit B1 homolog KTN80.3 of Arabidopsis thaliana (Mouse-ear cress).